The chain runs to 127 residues: MQLNMLKSKIHRATVTEANLNYVGSITIDRELMESAHIIEYEKIQVVDIDNGNRLETYVIAGEKGSKVICLNGAAARHVQPGDKVILMTYCQMDEEEAKIHKPIVIFLDENNSIFQITDYEKHGQVK.

Serine 25 serves as the catalytic Schiff-base intermediate with substrate; via pyruvic acid. Serine 25 is modified (pyruvic acid (Ser)). Threonine 57 is a binding site for substrate. Tyrosine 58 serves as the catalytic Proton donor. 73-75 (GAA) provides a ligand contact to substrate.

The protein belongs to the PanD family. As to quaternary structure, heterooctamer of four alpha and four beta subunits. It depends on pyruvate as a cofactor. Is synthesized initially as an inactive proenzyme, which is activated by self-cleavage at a specific serine bond to produce a beta-subunit with a hydroxyl group at its C-terminus and an alpha-subunit with a pyruvoyl group at its N-terminus.

It localises to the cytoplasm. The catalysed reaction is L-aspartate + H(+) = beta-alanine + CO2. Its pathway is cofactor biosynthesis; (R)-pantothenate biosynthesis; beta-alanine from L-aspartate: step 1/1. Functionally, catalyzes the pyruvoyl-dependent decarboxylation of aspartate to produce beta-alanine. The sequence is that of Aspartate 1-decarboxylase from Clostridium kluyveri (strain NBRC 12016).